A 561-amino-acid chain; its full sequence is Arginine--tRNA ligase (561 aa).

The 'HIGH' region signature appears at 136 to 146 (ANPTGLLHMGN).

The protein belongs to the class-I aminoacyl-tRNA synthetase family. Monomer.

The protein resides in the cytoplasm. The enzyme catalyses tRNA(Arg) + L-arginine + ATP = L-arginyl-tRNA(Arg) + AMP + diphosphate. In Desulforamulus reducens (strain ATCC BAA-1160 / DSM 100696 / MI-1) (Desulfotomaculum reducens), this protein is Arginine--tRNA ligase.